A 57-amino-acid polypeptide reads, in one-letter code: uncharacterized protein (57 aa).

A helical transmembrane segment spans residues 34–54; the sequence is AALLDAAALVVIPGLLTAAAV.

The protein localises to the membrane. This is an uncharacterized protein from Dictyostelium discoideum (Social amoeba).